The following is a 943-amino-acid chain: Protein translocase subunit SecA (943 aa).

ATP is bound by residues Gln-90, 108–112, and Asp-509; that span reads GEGKT. Residues 535 to 560 are disordered; the sequence is PNNEHKPPIPKQRSSKSKGGFSSKVG. Residues 551–560 show a composition bias toward low complexity; it reads SKGGFSSKVG.

The protein belongs to the SecA family. Monomer and homodimer. Part of the essential Sec protein translocation apparatus which comprises SecA, SecYEG and auxiliary proteins SecDF. Other proteins may also be involved.

It localises to the cell inner membrane. The protein resides in the cellular thylakoid membrane. The protein localises to the cytoplasm. It catalyses the reaction ATP + H2O + cellular proteinSide 1 = ADP + phosphate + cellular proteinSide 2.. Part of the Sec protein translocase complex. Interacts with the SecYEG preprotein conducting channel. Has a central role in coupling the hydrolysis of ATP to the transfer of proteins into and across the cell membrane, serving as an ATP-driven molecular motor driving the stepwise translocation of polypeptide chains across the membrane. Functionally, probably participates in protein translocation into and across both the cytoplasmic and thylakoid membranes in cyanobacterial cells. The polypeptide is Protein translocase subunit SecA (Prochlorococcus marinus (strain MIT 9312)).